The primary structure comprises 713 residues: Probable 1-deoxy-D-xylulose-5-phosphate synthase 2, chloroplastic (713 aa).

The transit peptide at 1–30 (MALQASSSPSMFRAIPTNTNASCRRKLQVR) directs the protein to the chloroplast. Thiamine diphosphate is bound by residues His-140 and 181 to 183 (GHS). Asp-212 provides a ligand contact to Mg(2+). Thiamine diphosphate contacts are provided by residues 213-214 (GA), Asn-241, Tyr-362, and Glu-444. Asn-241 lines the Mg(2+) pocket.

It belongs to the transketolase family. DXPS subfamily. Homodimer. Requires Mg(2+) as cofactor. It depends on thiamine diphosphate as a cofactor.

The protein localises to the plastid. Its subcellular location is the chloroplast. It carries out the reaction D-glyceraldehyde 3-phosphate + pyruvate + H(+) = 1-deoxy-D-xylulose 5-phosphate + CO2. It participates in metabolic intermediate biosynthesis; 1-deoxy-D-xylulose 5-phosphate biosynthesis; 1-deoxy-D-xylulose 5-phosphate from D-glyceraldehyde 3-phosphate and pyruvate: step 1/1. In terms of biological role, catalyzes the acyloin condensation reaction between C atoms 2 and 3 of pyruvate and glyceraldehyde 3-phosphate to yield 1-deoxy-D-xylulose-5-phosphate (DXP). Is a limiting enzyme for plastidic isoprenoid biosynthesis and essential for chloroplast development. This Oryza sativa subsp. japonica (Rice) protein is Probable 1-deoxy-D-xylulose-5-phosphate synthase 2, chloroplastic.